The following is a 322-amino-acid chain: Acetyl-coenzyme A carboxylase carboxyl transferase subunit alpha (322 aa).

In terms of domain architecture, CoA carboxyltransferase C-terminal spans 39-296 (DLTALKKQLI…HSKLVTELNY (258 aa)).

This sequence belongs to the AccA family. As to quaternary structure, acetyl-CoA carboxylase is a heterohexamer composed of biotin carboxyl carrier protein (accB), biotin carboxylase (accC) and two subunits each of ACCase subunit alpha (accA) and ACCase subunit beta (accD).

Its subcellular location is the plastid. It localises to the chloroplast. It catalyses the reaction N(6)-carboxybiotinyl-L-lysyl-[protein] + acetyl-CoA = N(6)-biotinyl-L-lysyl-[protein] + malonyl-CoA. Its pathway is lipid metabolism; malonyl-CoA biosynthesis; malonyl-CoA from acetyl-CoA: step 1/1. Functionally, component of the acetyl coenzyme A carboxylase (ACC) complex. First, biotin carboxylase catalyzes the carboxylation of biotin on its carrier protein (BCCP) and then the CO(2) group is transferred by the carboxyltransferase to acetyl-CoA to form malonyl-CoA. This Antithamnion sp. (Red alga) protein is Acetyl-coenzyme A carboxylase carboxyl transferase subunit alpha.